A 286-amino-acid chain; its full sequence is Pantothenate synthetase (286 aa).

Residue 30–37 (MGALHEGH) coordinates ATP. Residue histidine 37 is the Proton donor of the active site. Glutamine 61 is a binding site for (R)-pantoate. Beta-alanine is bound at residue glutamine 61. 147 to 150 (GEKD) provides a ligand contact to ATP. A (R)-pantoate-binding site is contributed by glutamine 153. Residues valine 180 and 188–191 (LSSR) contribute to the ATP site.

It belongs to the pantothenate synthetase family. As to quaternary structure, homodimer.

The protein localises to the cytoplasm. The enzyme catalyses (R)-pantoate + beta-alanine + ATP = (R)-pantothenate + AMP + diphosphate + H(+). The protein operates within cofactor biosynthesis; (R)-pantothenate biosynthesis; (R)-pantothenate from (R)-pantoate and beta-alanine: step 1/1. Catalyzes the condensation of pantoate with beta-alanine in an ATP-dependent reaction via a pantoyl-adenylate intermediate. The chain is Pantothenate synthetase from Novosphingobium aromaticivorans (strain ATCC 700278 / DSM 12444 / CCUG 56034 / CIP 105152 / NBRC 16084 / F199).